A 178-amino-acid polypeptide reads, in one-letter code: Cytidylate kinase (178 aa).

Residue 7-15 (GLPGTGTTT) coordinates ATP.

The protein belongs to the cytidylate kinase family. Type 2 subfamily.

It is found in the cytoplasm. It catalyses the reaction CMP + ATP = CDP + ADP. The enzyme catalyses dCMP + ATP = dCDP + ADP. The sequence is that of Cytidylate kinase from Methanococcus maripaludis (strain C7 / ATCC BAA-1331).